Here is a 329-residue protein sequence, read N- to C-terminus: MTGNAGEWCLMESDPGVFTELIKGFGCRGAQVEEIWSLEPENFEKLKPVHGLIFLFKWQPGEEPAGSVVQDSRLDTIFFAKQVINNACATQAIVSVLLNCTHQDVHLGETLSEFKEFSQSFDAAMKGLALSNSDVIRQVHNSFARQQMFEFDAKTSAKEEDAFHFVSYVPVNGRLYELDGLREGPIDLGACNQDDWISAVRPVIEKRIQKYSEGEIRFNLMAIVSDRKMIYEQKIAELQRQLAEEEPMDTDQGSNMLSAIQSEVAKNQMLIEEEVQKLKRYKIENIRRKHNYLPFIMELLKTLAEHQQLIPLVEKAKEKQNAKKAQETK.

One can recognise a UCH catalytic domain in the interval 7-225 (EWCLMESDPG…IRFNLMAIVS (219 aa)). Lys47 bears the N6-succinyllysine mark. The active-site Nucleophile is Cys88. Position 158 is an N6-acetyllysine (Lys158). Residue His164 is the Proton donor of the active site. Lys289 is subject to N6-succinyllysine. The 29-residue stretch at 291 to 319 (NYLPFIMELLKTLAEHQQLIPLVEKAKEK) folds into the ULD domain. Residues 313–329 (VEKAKEKQNAKKAQETK) form an interaction with ADRM1 region.

The protein belongs to the peptidase C12 family. Component of the 19S (PA700) regulatory complex of the 26S proteasome. Interacts with ADRM1 and NFRKB. Component of the INO80 complex; specifically part of a complex module associated with N-terminus of INO80.

The protein resides in the cytoplasm. The protein localises to the nucleus. It catalyses the reaction Thiol-dependent hydrolysis of ester, thioester, amide, peptide and isopeptide bonds formed by the C-terminal Gly of ubiquitin (a 76-residue protein attached to proteins as an intracellular targeting signal).. Its activity is regulated as follows. Activated by ADRM1. Inhibited by interaction with NFRKB. Its function is as follows. Protease that specifically cleaves 'Lys-48'-linked polyubiquitin chains. Deubiquitinating enzyme associated with the 19S regulatory subunit of the 26S proteasome. Putative regulatory component of the INO80 complex; however is inactive in the INO80 complex and is activated by a transient interaction of the INO80 complex with the proteasome via ADRM1. In Sus scrofa (Pig), this protein is Ubiquitin carboxyl-terminal hydrolase isozyme L5 (UCHL5).